The chain runs to 147 residues: UPF0251 protein CTC_01373 (147 aa).

It belongs to the UPF0251 family.

The protein is UPF0251 protein CTC_01373 of Clostridium tetani (strain Massachusetts / E88).